Here is a 267-residue protein sequence, read N- to C-terminus: Glutamate 5-kinase (267 aa).

Residue K17 coordinates ATP. Substrate-binding residues include S57, D144, and N156. Residues 176-177 (SD) and 218-224 (TGGMATK) contribute to the ATP site.

This sequence belongs to the glutamate 5-kinase family.

The protein localises to the cytoplasm. The catalysed reaction is L-glutamate + ATP = L-glutamyl 5-phosphate + ADP. It participates in amino-acid biosynthesis; L-proline biosynthesis; L-glutamate 5-semialdehyde from L-glutamate: step 1/2. In terms of biological role, catalyzes the transfer of a phosphate group to glutamate to form L-glutamate 5-phosphate. This Clostridium acetobutylicum (strain ATCC 824 / DSM 792 / JCM 1419 / IAM 19013 / LMG 5710 / NBRC 13948 / NRRL B-527 / VKM B-1787 / 2291 / W) protein is Glutamate 5-kinase.